A 310-amino-acid polypeptide reads, in one-letter code: Methionyl-tRNA formyltransferase (310 aa).

A (6S)-5,6,7,8-tetrahydrofolate-binding site is contributed by 110–113 (SLLP).

The protein belongs to the Fmt family.

The catalysed reaction is L-methionyl-tRNA(fMet) + (6R)-10-formyltetrahydrofolate = N-formyl-L-methionyl-tRNA(fMet) + (6S)-5,6,7,8-tetrahydrofolate + H(+). Functionally, attaches a formyl group to the free amino group of methionyl-tRNA(fMet). The formyl group appears to play a dual role in the initiator identity of N-formylmethionyl-tRNA by promoting its recognition by IF2 and preventing the misappropriation of this tRNA by the elongation apparatus. This is Methionyl-tRNA formyltransferase from Streptomyces coelicolor (strain ATCC BAA-471 / A3(2) / M145).